The following is a 76-amino-acid chain: Large ribosomal subunit protein uL24 (76 aa).

The protein belongs to the universal ribosomal protein uL24 family. Part of the 50S ribosomal subunit.

In terms of biological role, one of two assembly initiator proteins, it binds directly to the 5'-end of the 23S rRNA, where it nucleates assembly of the 50S subunit. Functionally, one of the proteins that surrounds the polypeptide exit tunnel on the outside of the subunit. This is Large ribosomal subunit protein uL24 from Campylobacter hominis (strain ATCC BAA-381 / DSM 21671 / CCUG 45161 / LMG 19568 / NCTC 13146 / CH001A).